A 200-amino-acid polypeptide reads, in one-letter code: NADH-quinone oxidoreductase subunit C (200 aa).

Belongs to the complex I 30 kDa subunit family. NDH-1 is composed of 14 different subunits. Subunits NuoB, C, D, E, F, and G constitute the peripheral sector of the complex.

It localises to the cell inner membrane. It catalyses the reaction a quinone + NADH + 5 H(+)(in) = a quinol + NAD(+) + 4 H(+)(out). In terms of biological role, NDH-1 shuttles electrons from NADH, via FMN and iron-sulfur (Fe-S) centers, to quinones in the respiratory chain. The immediate electron acceptor for the enzyme in this species is believed to be ubiquinone. Couples the redox reaction to proton translocation (for every two electrons transferred, four hydrogen ions are translocated across the cytoplasmic membrane), and thus conserves the redox energy in a proton gradient. This Burkholderia cenocepacia (strain HI2424) protein is NADH-quinone oxidoreductase subunit C.